The following is a 336-amino-acid chain: Secreted effector protein SifA (336 aa).

Positions 1-330 are interaction with host PLEKHM2; that stretch reads MPITIGNGFL…LHVRSEQQSG (330 aa).

It belongs to the Sif family. In terms of assembly, interacts with host PLEKHM2. Interacts with SseJ; the interaction is indirect.

The protein localises to the secreted. Its subcellular location is the host cytoplasm. It localises to the host cell membrane. Functionally, effector proteins function to alter host cell physiology and promote bacterial survival in host tissues. This protein is required for endosomal tubulation and formation of Salmonella-induced filaments (Sifs), which are filamentous structures containing lysosomal membrane glycoproteins within epithelial cells. Sif formation is concomitant with intracellular bacterial replication. The protein is Secreted effector protein SifA (sifA) of Salmonella typhimurium (strain LT2 / SGSC1412 / ATCC 700720).